The chain runs to 120 residues: Large ribosomal subunit protein uL18 (120 aa).

Belongs to the universal ribosomal protein uL18 family. As to quaternary structure, part of the 50S ribosomal subunit; part of the 5S rRNA/L5/L18/L25 subcomplex. Contacts the 5S and 23S rRNAs.

Its function is as follows. This is one of the proteins that bind and probably mediate the attachment of the 5S RNA into the large ribosomal subunit, where it forms part of the central protuberance. This is Large ribosomal subunit protein uL18 from Staphylococcus carnosus (strain TM300).